The chain runs to 543 residues: Chaperonin GroEL 1 (543 aa).

Residues 30–33 (TLGP), Lys51, 87–91 (DGTTT), Gly415, and Asp496 contribute to the ATP site.

The protein belongs to the chaperonin (HSP60) family. As to quaternary structure, forms a cylinder of 14 subunits composed of two heptameric rings stacked back-to-back. Interacts with the co-chaperonin GroES.

It localises to the cytoplasm. The catalysed reaction is ATP + H2O + a folded polypeptide = ADP + phosphate + an unfolded polypeptide.. Together with its co-chaperonin GroES, plays an essential role in assisting protein folding. The GroEL-GroES system forms a nano-cage that allows encapsulation of the non-native substrate proteins and provides a physical environment optimized to promote and accelerate protein folding. This Roseobacter denitrificans (strain ATCC 33942 / OCh 114) (Erythrobacter sp. (strain OCh 114)) protein is Chaperonin GroEL 1.